We begin with the raw amino-acid sequence, 356 residues long: UDP-N-acetylglucosamine--N-acetylmuramyl-(pentapeptide) pyrophosphoryl-undecaprenol N-acetylglucosamine transferase (356 aa).

Arginine 166, serine 196, and glutamine 290 together coordinate UDP-N-acetyl-alpha-D-glucosamine.

It belongs to the glycosyltransferase 28 family. MurG subfamily.

Its subcellular location is the cell membrane. It carries out the reaction Mur2Ac(oyl-L-Ala-gamma-D-Glu-L-Lys-D-Ala-D-Ala)-di-trans,octa-cis-undecaprenyl diphosphate + UDP-N-acetyl-alpha-D-glucosamine = beta-D-GlcNAc-(1-&gt;4)-Mur2Ac(oyl-L-Ala-gamma-D-Glu-L-Lys-D-Ala-D-Ala)-di-trans,octa-cis-undecaprenyl diphosphate + UDP + H(+). Its pathway is cell wall biogenesis; peptidoglycan biosynthesis. In terms of biological role, cell wall formation. Catalyzes the transfer of a GlcNAc subunit on undecaprenyl-pyrophosphoryl-MurNAc-pentapeptide (lipid intermediate I) to form undecaprenyl-pyrophosphoryl-MurNAc-(pentapeptide)GlcNAc (lipid intermediate II). In Staphylococcus aureus (strain MRSA252), this protein is UDP-N-acetylglucosamine--N-acetylmuramyl-(pentapeptide) pyrophosphoryl-undecaprenol N-acetylglucosamine transferase.